A 528-amino-acid polypeptide reads, in one-letter code: Chaperonin GroEL, chloroplastic (528 aa).

ATP contacts are provided by residues 29–32 (TLGP), 86–90 (DGTTT), Gly-414, 480–482 (DAA), and Asp-496.

This sequence belongs to the chaperonin (HSP60) family. As to quaternary structure, forms a cylinder of 14 subunits composed of two heptameric rings stacked back-to-back. Interacts with the co-chaperonin GroES.

The protein localises to the plastid. It is found in the chloroplast. The enzyme catalyses ATP + H2O + a folded polypeptide = ADP + phosphate + an unfolded polypeptide.. Functionally, together with its co-chaperonin GroES, plays an essential role in assisting protein folding. The GroEL-GroES system forms a nano-cage that allows encapsulation of the non-native substrate proteins and provides a physical environment optimized to promote and accelerate protein folding. In Pyropia yezoensis (Susabi-nori), this protein is Chaperonin GroEL, chloroplastic.